Consider the following 159-residue polypeptide: ATP synthase subunit b (159 aa).

The helical transmembrane segment at 7-27 threads the bilayer; that stretch reads VIFMTIINFCILVAILKHFFW.

This sequence belongs to the ATPase B chain family. As to quaternary structure, F-type ATPases have 2 components, F(1) - the catalytic core - and F(0) - the membrane proton channel. F(1) has five subunits: alpha(3), beta(3), gamma(1), delta(1), epsilon(1). F(0) has three main subunits: a(1), b(2) and c(10-14). The alpha and beta chains form an alternating ring which encloses part of the gamma chain. F(1) is attached to F(0) by a central stalk formed by the gamma and epsilon chains, while a peripheral stalk is formed by the delta and b chains.

The protein resides in the cell membrane. F(1)F(0) ATP synthase produces ATP from ADP in the presence of a proton or sodium gradient. F-type ATPases consist of two structural domains, F(1) containing the extramembraneous catalytic core and F(0) containing the membrane proton channel, linked together by a central stalk and a peripheral stalk. During catalysis, ATP synthesis in the catalytic domain of F(1) is coupled via a rotary mechanism of the central stalk subunits to proton translocation. Its function is as follows. Component of the F(0) channel, it forms part of the peripheral stalk, linking F(1) to F(0). This chain is ATP synthase subunit b, found in Clostridium botulinum (strain Alaska E43 / Type E3).